The following is a 141-amino-acid chain: NADH-quinone oxidoreductase subunit A (141 aa).

The next 3 helical transmembrane spans lie at L24–A44, V77–A97, and L106–I126.

It belongs to the complex I subunit 3 family. As to quaternary structure, NDH-1 is composed of 14 different subunits. Subunits NuoA, H, J, K, L, M, N constitute the membrane sector of the complex.

The protein resides in the cell inner membrane. It catalyses the reaction a quinone + NADH + 5 H(+)(in) = a quinol + NAD(+) + 4 H(+)(out). Functionally, NDH-1 shuttles electrons from NADH, via FMN and iron-sulfur (Fe-S) centers, to quinones in the respiratory chain. The immediate electron acceptor for the enzyme in this species is believed to be ubiquinone. Couples the redox reaction to proton translocation (for every two electrons transferred, four hydrogen ions are translocated across the cytoplasmic membrane), and thus conserves the redox energy in a proton gradient. The protein is NADH-quinone oxidoreductase subunit A of Syntrophotalea carbinolica (strain DSM 2380 / NBRC 103641 / GraBd1) (Pelobacter carbinolicus).